The primary structure comprises 225 residues: Protein-L-isoaspartate O-methyltransferase (225 aa).

The active site involves Ser75.

The protein belongs to the methyltransferase superfamily. L-isoaspartyl/D-aspartyl protein methyltransferase family.

It localises to the cytoplasm. It catalyses the reaction [protein]-L-isoaspartate + S-adenosyl-L-methionine = [protein]-L-isoaspartate alpha-methyl ester + S-adenosyl-L-homocysteine. In terms of biological role, catalyzes the methyl esterification of L-isoaspartyl residues in peptides and proteins that result from spontaneous decomposition of normal L-aspartyl and L-asparaginyl residues. It plays a role in the repair and/or degradation of damaged proteins. This is Protein-L-isoaspartate O-methyltransferase from Xylella fastidiosa (strain 9a5c).